Reading from the N-terminus, the 531-residue chain is Developmental and secondary metabolism regulator VE1 (531 aa).

Residues 26-220 (NRSLWYQMTV…ADQGCPVRIR (195 aa)) form the Velvet domain. Positions 40–45 (ERARAC) match the Nuclear localization signal motif. Disordered stretches follow at residues 206–435 (LSKT…SQTS) and 447–517 (PVSP…SRAD). Residues 244–253 (FERREEDFGR) are compositionally biased toward basic and acidic residues. The span at 295-306 (YPPPPPPPPSYE) shows a compositional bias: pro residues. A compositionally biased stretch (polar residues) spans 348–357 (YAPTSQSPYS). Residues 381–390 (LKHELYDRRQ) show a composition bias toward basic and acidic residues. The segment covering 391 to 405 (STSTYVPPSPSVYST) has biased composition (low complexity). Residues 416–427 (SYPPTPVAAPRP) are compositionally biased toward pro residues. Residues 430-461 (MHSQTSLPALKIDQLVSPVSPLPPIEPQTGPA) form a PEST region. Over residues 479–491 (FAQSTRPLHNGQR) the composition is skewed to polar residues.

It belongs to the velvet family. VeA subfamily. As to quaternary structure, component of the heterotrimeric velvet complex composed of LAE1, VE1 and VELB; VE1 acting as a bridging protein between LAE1 and VELB. Interacts with VELB and VELC.

Its subcellular location is the nucleus. It is found in the cytoplasm. Functionally, component of the velvet transcription factor complex that controls sexual/asexual developmental ratio in response to light, promoting sexual development in the darkness while stimulating asexual sporulation under illumination. The velvet complex hat acts as a global regulator for secondary metabolite gene expression. Controls the expression of the cycotoxins fumonisins and fusarins gene cluster. Involved in cell wall integrity, cell surface hydrophobicity, hyphal polarity and conidiation pattern. Required for pathogenicity against maize seedlings. Involved in oxidative stress resistance by positively regulating the transcription of the catalase-encoding gene CAT2. The protein is Developmental and secondary metabolism regulator VE1 of Gibberella moniliformis (strain M3125 / FGSC 7600) (Maize ear and stalk rot fungus).